Here is an 863-residue protein sequence, read N- to C-terminus: Leucine--tRNA ligase (863 aa).

Residues 42–52 (PYPSGRLHMGH) carry the 'HIGH' region motif. The short motif at 622 to 626 (KMSKS) is the 'KMSKS' region element. Residue K625 coordinates ATP.

The protein belongs to the class-I aminoacyl-tRNA synthetase family.

It localises to the cytoplasm. It carries out the reaction tRNA(Leu) + L-leucine + ATP = L-leucyl-tRNA(Leu) + AMP + diphosphate. The chain is Leucine--tRNA ligase from Shewanella frigidimarina (strain NCIMB 400).